Reading from the N-terminus, the 275-residue chain is Small ribosomal subunit protein uS3 (275 aa).

In terms of domain architecture, KH type-2 spans I38 to K106. The span at N216–G228 shows a compositional bias: low complexity. Residues N216–A275 are disordered. The span at G229–G244 shows a compositional bias: basic and acidic residues. Positions P249–A268 are enriched in low complexity.

This sequence belongs to the universal ribosomal protein uS3 family. Part of the 30S ribosomal subunit. Forms a tight complex with proteins S10 and S14.

Its function is as follows. Binds the lower part of the 30S subunit head. Binds mRNA in the 70S ribosome, positioning it for translation. The polypeptide is Small ribosomal subunit protein uS3 (Streptomyces avermitilis (strain ATCC 31267 / DSM 46492 / JCM 5070 / NBRC 14893 / NCIMB 12804 / NRRL 8165 / MA-4680)).